A 454-amino-acid polypeptide reads, in one-letter code: Putative flavin-containing monoamine oxidase AofH (454 aa).

The protein belongs to the flavin monoamine oxidase family. FAD is required as a cofactor.

The polypeptide is Putative flavin-containing monoamine oxidase AofH (aofH) (Mycobacterium tuberculosis (strain CDC 1551 / Oshkosh)).